A 109-amino-acid polypeptide reads, in one-letter code: MAQFEWVHAAWLALAIVLEIVANVFLKFSDGFRRKIFGLLSLAAVLAAFSALSQAVKGIDLSVAYALWGGFGIAATLAAGWILFGQRLNRKGWIGLVLLLAGMIMVKLA.

4 helical membrane passes run 6 to 26 (WVHA…NVFL), 36 to 56 (IFGL…SQAV), 64 to 84 (AYAL…WILF), and 88 to 108 (LNRK…MVKL).

Belongs to the drug/metabolite transporter (DMT) superfamily. Small multidrug resistance (SMR) (TC 2.A.7.1) family. MdtI subfamily. As to quaternary structure, forms a complex with MdtJ.

It localises to the cell inner membrane. Its function is as follows. Catalyzes the excretion of spermidine. The polypeptide is Spermidine export protein MdtI (Escherichia coli O139:H28 (strain E24377A / ETEC)).